A 71-amino-acid polypeptide reads, in one-letter code: Disintegrin tzabcanin (71 aa).

In terms of domain architecture, Disintegrin spans 1 to 71 (GEECDCGSPA…ADCPRNHFHA (71 aa)). 6 disulfide bridges follow: Cys-4-Cys-19, Cys-6-Cys-14, Cys-13-Cys-36, Cys-27-Cys-33, Cys-32-Cys-57, and Cys-45-Cys-64. Positions 49–51 (RGD) match the Cell attachment site motif.

It belongs to the venom metalloproteinase (M12B) family. P-II subfamily. P-IIa sub-subfamily. In terms of tissue distribution, expressed by the venom gland.

The protein localises to the secreted. Functionally, inhibits fibrinogen interaction with platelets. Acts by binding to alpha-IIb/beta-3 (ITGA2B/ITGB3) on the platelet surface and inhibits aggregation induced by ADP, thrombin, platelet-activating factor and collagen. Inhibits cell adhesion to vitronectin, probably by blocking its receptor integrin alpha-V/beta-3 (ITGAV/ITGB3), and to fibronectin in vitro. Shows little to no cytotoxicity in vitro. This chain is Disintegrin tzabcanin, found in Crotalus tzabcan (Yucatan neotropical rattlesnake).